The sequence spans 203 residues: Glycerol-3-phosphate acyltransferase (203 aa).

4 helical membrane-spanning segments follow: residues 4–24 (LVLL…AVLI), 80–100 (PFLL…PIFF), 116–136 (APIG…TVFI), and 138–158 (GYSS…TWFV).

Belongs to the PlsY family. As to quaternary structure, probably interacts with PlsX.

The protein localises to the cell inner membrane. It carries out the reaction an acyl phosphate + sn-glycerol 3-phosphate = a 1-acyl-sn-glycero-3-phosphate + phosphate. The protein operates within lipid metabolism; phospholipid metabolism. Catalyzes the transfer of an acyl group from acyl-phosphate (acyl-PO(4)) to glycerol-3-phosphate (G3P) to form lysophosphatidic acid (LPA). This enzyme utilizes acyl-phosphate as fatty acyl donor, but not acyl-CoA or acyl-ACP. This is Glycerol-3-phosphate acyltransferase from Photobacterium profundum (strain SS9).